The following is a 529-amino-acid chain: Zinc finger CCCH domain-containing protein 65 (529 aa).

Positions 1–10 (MADADARAPP) are enriched in basic and acidic residues. 2 disordered regions span residues 1–36 (MADA…EDEV) and 134–179 (PARK…GSYV). Low complexity predominate over residues 14–31 (PGATPIGSISPSSAAPAA). C3H1-type zinc fingers lie at residues 108 to 136 (RPGE…HPAR), 237 to 265 (GSSQ…HRDG), and 285 to 313 (RPGE…HPDP). A disordered region spans residues 313-347 (PSNVASKDPQLEHENGDAPQQDVQGSSSQPNASIW). The span at 333–344 (QDVQGSSSQPNA) shows a compositional bias: polar residues. 2 C3H1-type zinc fingers span residues 433-461 (RPGQ…HPRS) and 477-505 (KPDQ…HPFN).

The protein is Zinc finger CCCH domain-containing protein 65 of Oryza sativa subsp. japonica (Rice).